The sequence spans 431 residues: Glutamate-1-semialdehyde 2,1-aminomutase (431 aa).

Residue lysine 265 is modified to N6-(pyridoxal phosphate)lysine.

This sequence belongs to the class-III pyridoxal-phosphate-dependent aminotransferase family. HemL subfamily. Homodimer. Requires pyridoxal 5'-phosphate as cofactor.

The protein localises to the cytoplasm. The enzyme catalyses (S)-4-amino-5-oxopentanoate = 5-aminolevulinate. It participates in porphyrin-containing compound metabolism; protoporphyrin-IX biosynthesis; 5-aminolevulinate from L-glutamyl-tRNA(Glu): step 2/2. This chain is Glutamate-1-semialdehyde 2,1-aminomutase, found in Vibrio vulnificus (strain YJ016).